Here is a 70-residue protein sequence, read N- to C-terminus: Brevinin-1CG3 (70 aa).

Residues 1–22 (MFTLKKSLLLLFFLGTINLSLC) form the signal peptide. Residues 23-44 (EQERNAEEERRDDSDKRDVEVE) constitute a propeptide, removed in mature form. Cysteines 64 and 70 form a disulfide.

The protein belongs to the frog skin active peptide (FSAP) family. Brevinin subfamily. Expressed by the skin glands.

It is found in the secreted. Its function is as follows. Antimicrobial peptide active against a variety of Gram-positive and some Gram-negative bacterial strains. Has antifungal activity against a slime mold isolate. Has hemolytic activity against human erythrocytes. In Amolops chunganensis (Chungan torrent frog), this protein is Brevinin-1CG3.